Reading from the N-terminus, the 98-residue chain is NADH-ubiquinone oxidoreductase chain 4L (98 aa).

3 helical membrane-spanning segments follow: residues 1–21 (MSLT…GLLM), 29–49 (SLLC…MTIL), and 61–81 (IILL…LVMV).

The protein belongs to the complex I subunit 4L family. As to quaternary structure, core subunit of respiratory chain NADH dehydrogenase (Complex I) which is composed of 45 different subunits.

The protein localises to the mitochondrion inner membrane. It catalyses the reaction a ubiquinone + NADH + 5 H(+)(in) = a ubiquinol + NAD(+) + 4 H(+)(out). Its function is as follows. Core subunit of the mitochondrial membrane respiratory chain NADH dehydrogenase (Complex I) which catalyzes electron transfer from NADH through the respiratory chain, using ubiquinone as an electron acceptor. Part of the enzyme membrane arm which is embedded in the lipid bilayer and involved in proton translocation. This Stenoderma rufum (Red fruit bat) protein is NADH-ubiquinone oxidoreductase chain 4L (MT-ND4L).